Consider the following 568-residue polypeptide: DNA ligase 2 (568 aa).

An ATP-binding site is contributed by Glu254. The N6-AMP-lysine intermediate role is filled by Lys256. Residues Arg261, Arg276, Glu306, Phe346, Arg425, and Lys431 each contribute to the ATP site.

This sequence belongs to the ATP-dependent DNA ligase family. It depends on Mg(2+) as a cofactor.

The enzyme catalyses ATP + (deoxyribonucleotide)n-3'-hydroxyl + 5'-phospho-(deoxyribonucleotide)m = (deoxyribonucleotide)n+m + AMP + diphosphate.. Functionally, DNA ligase that seals nicks in double-stranded DNA during DNA replication, DNA recombination and DNA repair. This Methanosarcina mazei (strain ATCC BAA-159 / DSM 3647 / Goe1 / Go1 / JCM 11833 / OCM 88) (Methanosarcina frisia) protein is DNA ligase 2.